Reading from the N-terminus, the 521-residue chain is Probable protein phosphatase 2C 16 (521 aa).

The region spanning 21–327 is the PPM-type phosphatase domain; sequence KYVVSSMQGW…ENTTVILVQF (307 aa). 4 residues coordinate Mn(2+): Asp57, Gly58, Gln276, and Glu318. The disordered stretch occupies residues 354 to 431; it reads AAPAGASDTS…ADADDGAPKP (78 aa).

The protein belongs to the PP2C family. Requires Mg(2+) as cofactor. The cofactor is Mn(2+).

The catalysed reaction is O-phospho-L-seryl-[protein] + H2O = L-seryl-[protein] + phosphate. The enzyme catalyses O-phospho-L-threonyl-[protein] + H2O = L-threonyl-[protein] + phosphate. This is Probable protein phosphatase 2C 16 from Oryza sativa subsp. japonica (Rice).